The chain runs to 599 residues: DNA primase (599 aa).

The CHC2-type zinc-finger motif lies at 38–62; that stretch reads CPFHDEKTPSFTVSEDKQICHCFGC. One can recognise a Toprim domain in the interval 260 to 341; the sequence is DEIVLLEGFM…NVFVIQLPSG (82 aa). Mg(2+) contacts are provided by glutamate 266, aspartate 310, and aspartate 312.

This sequence belongs to the DnaG primase family. As to quaternary structure, monomer. Interacts with DnaB. Zn(2+) serves as cofactor. Mg(2+) is required as a cofactor.

It carries out the reaction ssDNA + n NTP = ssDNA/pppN(pN)n-1 hybrid + (n-1) diphosphate.. RNA polymerase that catalyzes the synthesis of short RNA molecules used as primers for DNA polymerase during DNA replication. This is DNA primase from Staphylococcus aureus (strain MRSA252).